A 141-amino-acid chain; its full sequence is UPF0310 protein SGO_1818 (141 aa).

Belongs to the UPF0310 family.

This is UPF0310 protein SGO_1818 from Streptococcus gordonii (strain Challis / ATCC 35105 / BCRC 15272 / CH1 / DL1 / V288).